The chain runs to 667 residues: Sterile alpha motif domain-containing protein 15 (667 aa).

Acidic residues predominate over residues 1–18; that stretch reads MAEVPEDYDSGPDEDGEP. 2 disordered regions span residues 1 to 108 and 147 to 424; these read MAEV…KSER and SAME…IKSK. Composition is skewed to basic and acidic residues over residues 19–53, 84–93, 187–196, and 228–266; these read ESER…HEPQ, IAKESKRDVP, ESLRVQHEET, and TKPD…KSSE. Acidic residues predominate over residues 268 to 277; sequence AGLEPPEETQ. Basic and acidic residues-rich tracts occupy residues 284–314, 322–338, 346–364, and 381–422; these read MQRK…KSTD, EEIK…KPNE, EMMK…EEKN, and PRVE…EPIK. Residues 538-601 enclose the SAM domain; it reads WDPEKVAEWI…SRHTRELLEI (64 aa).

This chain is Sterile alpha motif domain-containing protein 15 (SAMD15), found in Macaca fascicularis (Crab-eating macaque).